A 216-amino-acid polypeptide reads, in one-letter code: Small ribosomal subunit protein uS3c (216 aa).

Positions 39 to 109 (IRSYINRELE…SIRINVIELT (71 aa)) constitute a KH type-2 domain.

It belongs to the universal ribosomal protein uS3 family. As to quaternary structure, part of the 30S ribosomal subunit.

It is found in the plastid. It localises to the chloroplast. The protein is Small ribosomal subunit protein uS3c (rps3) of Guillardia theta (Cryptophyte).